Consider the following 316-residue polypeptide: PDZ and LIM domain protein 3 (316 aa).

The PDZ domain occupies 1 to 84 (MPQNVVLPGP…QLCLKIDRAE (84 aa)). Serine 18 and serine 93 each carry phosphoserine. Arginine 164 bears the Omega-N-methylarginine mark. The 60-residue stretch at 244–303 (PLCDKCGSGIVGAVVKARDKYRHPECFVCADCNLNLKQKGYFFVEGELYCETHARARTRP) folds into the LIM zinc-binding domain.

As to quaternary structure, interacts with ACTN2. Forms a heterodimer with PDLIM4 (via LIM domain).

The protein localises to the cytoplasm. It is found in the myofibril. The protein resides in the sarcomere. Its subcellular location is the z line. May play a role in the organization of actin filament arrays within muscle cells. This is PDZ and LIM domain protein 3 (Pdlim3) from Mus musculus (Mouse).